A 155-amino-acid chain; its full sequence is Small ribosomal subunit protein uS9 (155 aa).

It belongs to the universal ribosomal protein uS9 family.

The sequence is that of Small ribosomal subunit protein uS9 from Rhizobium etli (strain ATCC 51251 / DSM 11541 / JCM 21823 / NBRC 15573 / CFN 42).